The primary structure comprises 201 residues: Dermatopontin (201 aa).

The N-terminal stretch at 1 to 18 (MDLTLLWVLLPLVTTAWG) is a signal peptide. The residue at position 19 (glutamine 19) is a Pyrrolidone carboxylic acid. Residues 19 to 186 (QYGGYGYPYQ…AVERDRQWKF (168 aa)) form a 2 X 53-55 AA tandem repeats region. Tyrosine 23 carries the sulfotyrosine modification. 4 repeat units span residues 26-79 (PYQQ…ACMP), 70-75 (DRQWNY), 80-135 (TPQS…CCRY), and 125-130 (DREWQF). Intrachain disulfides connect cysteine 50/cysteine 77, cysteine 90/cysteine 132, cysteine 106/cysteine 133, cysteine 139/cysteine 196, and cysteine 143/cysteine 189. The segment at 70 to 186 (DRQWNYACMP…AVERDRQWKF (117 aa)) is 3 X 6 AA tandem repeats of D-R-[EQ]-W-[NQK]-[FY]. A sulfotyrosine mark is found at tyrosine 162, tyrosine 164, and tyrosine 167. One copy of the 2-3 repeat lies at 181 to 186 (DRQWKF). Position 194 is a sulfotyrosine (tyrosine 194).

It belongs to the dermatopontin family. In terms of assembly, interacts with TGFB1, DCN and collagen. Sulfated on tyrosine residue(s).

It localises to the secreted. The protein localises to the extracellular space. Its subcellular location is the extracellular matrix. In terms of biological role, seems to mediate adhesion by cell surface integrin binding. May serve as a communication link between the dermal fibroblast cell surface and its extracellular matrix environment. Enhances TGFB1 activity. Inhibits cell proliferation. Accelerates collagen fibril formation, and stabilizes collagen fibrils against low-temperature dissociation. This is Dermatopontin (Dpt) from Mus musculus (Mouse).